A 693-amino-acid chain; its full sequence is tRNA (guanine(27)-N(2))-dimethyltransferase (693 aa).

Residues 95-99 carry the Nucleolar localization signal motif; sequence HKLRR. A C2H2-type zinc finger spans residues 144-166; that stretch reads YHCIICSATITRRTDMLGHVRRH. The Trm1 methyltransferase domain occupies 187–648; that stretch reads EILKEADTDV…APLMQFKSIL (462 aa). 4 residues coordinate S-adenosyl-L-methionine: Arg220, Asp267, Asp317, and Ala318. Zn(2+) is bound by residues Cys448, Cys451, Cys473, and Cys475. Residue Lys545 forms a Glycyl lysine isopeptide (Lys-Gly) (interchain with G-Cter in SUMO2) linkage. Ser572 and Ser667 each carry phosphoserine.

This sequence belongs to the class I-like SAM-binding methyltransferase superfamily. Trm1 family.

Its subcellular location is the nucleus. It localises to the nucleolus. It catalyses the reaction guanosine(27) in tRNA(Tyr) + 2 S-adenosyl-L-methionine = N(2)-dimethylguanosine(27) in tRNA(Tyr) + 2 S-adenosyl-L-homocysteine + 2 H(+). Functionally, specifically dimethylates a single guanine residue at position 27 of tRNA(Tyr) using S-adenosyl-L-methionine as donor of the methyl groups. Dimethylation at position 27 of tRNA(Tyr) is required for efficient translation of tyrosine codons. Also required to maintain 3-(3-amino-3-carboxypropyl)uridine (acp3U) in the D-loop of several cytoplasmic tRNAs. This Macaca fascicularis (Crab-eating macaque) protein is tRNA (guanine(27)-N(2))-dimethyltransferase (TRMT1L).